Here is a 311-residue protein sequence, read N- to C-terminus: Probable manganese-dependent inorganic pyrophosphatase (311 aa).

6 residues coordinate Mn(2+): His-9, Asp-13, Asp-15, Asp-75, His-97, and Asp-149.

Belongs to the PPase class C family. The cofactor is Mn(2+).

The protein localises to the cytoplasm. It catalyses the reaction diphosphate + H2O = 2 phosphate + H(+). The sequence is that of Probable manganese-dependent inorganic pyrophosphatase from Lactobacillus delbrueckii subsp. bulgaricus (strain ATCC BAA-365 / Lb-18).